The sequence spans 433 residues: ATP-dependent protease ATPase subunit HslU (433 aa).

Residues I18, 60-65 (GVGKTE), D246, E311, and R383 contribute to the ATP site.

The protein belongs to the ClpX chaperone family. HslU subfamily. In terms of assembly, a double ring-shaped homohexamer of HslV is capped on each side by a ring-shaped HslU homohexamer. The assembly of the HslU/HslV complex is dependent on binding of ATP.

The protein localises to the cytoplasm. Its function is as follows. ATPase subunit of a proteasome-like degradation complex; this subunit has chaperone activity. The binding of ATP and its subsequent hydrolysis by HslU are essential for unfolding of protein substrates subsequently hydrolyzed by HslV. HslU recognizes the N-terminal part of its protein substrates and unfolds these before they are guided to HslV for hydrolysis. The protein is ATP-dependent protease ATPase subunit HslU of Cereibacter sphaeroides (strain KD131 / KCTC 12085) (Rhodobacter sphaeroides).